A 245-amino-acid chain; its full sequence is tRNA pseudouridine synthase A (245 aa).

D52 acts as the Nucleophile in catalysis. Position 111 (Y111) interacts with substrate.

It belongs to the tRNA pseudouridine synthase TruA family. Homodimer.

It catalyses the reaction uridine(38/39/40) in tRNA = pseudouridine(38/39/40) in tRNA. Functionally, formation of pseudouridine at positions 38, 39 and 40 in the anticodon stem and loop of transfer RNAs. This is tRNA pseudouridine synthase A from Ehrlichia chaffeensis (strain ATCC CRL-10679 / Arkansas).